Consider the following 213-residue polypeptide: ER lumen protein-retaining receptor erd-2.1 (213 aa).

Residues 1–2 (MN) lie on the Lumenal side of the membrane. Residues 3–21 (LFRFTADVAHAIAIVVLLL) form a helical membrane-spanning segment. At 22-35 (KIWKSRSCEGISGR) the chain is on the cytoplasmic side. A helical transmembrane segment spans residues 36-53 (SQLLFALVFVTRYLDLFT). The Lumenal segment spans residues 54 to 61 (NFFSFYNT). The chain crosses the membrane as a helical span at residues 62–80 (AMKIFYLVASFGTVYLMWA). Residues 81–96 (KFKATYDRNNDSFRIE) are Cytoplasmic-facing. Residues 97-110 (FLVIPSMILALLIN) traverse the membrane as a helical segment. Residues 111–117 (HEFIFME) lie on the Lumenal side of the membrane. The chain crosses the membrane as a helical span at residues 118-137 (VMWTFSIYLEAVAIMPQLFM). Over 138–149 (LSRTGNAETITA) the chain is Cytoplasmic. A helical transmembrane segment spans residues 150–168 (HYLFALGSYRFLYILNWVY). At 169–178 (RYYTESFFDP) the chain is on the lumenal side. A helical membrane pass occupies residues 179-199 (ISVVAGIVQTVLYADFFYLYI). The Cytoplasmic segment spans residues 200-213 (TRVIQSNRQFEMSA).

It belongs to the ERD2 family.

The protein resides in the endoplasmic reticulum membrane. Functionally, required for the retention of luminal endoplasmic reticulum proteins. Determines the specificity of the luminal ER protein retention system. Also required for normal vesicular traffic through the Golgi. This is ER lumen protein-retaining receptor erd-2.1 from Caenorhabditis elegans.